A 128-amino-acid chain; its full sequence is Fluoride-specific ion channel FluC (128 aa).

4 helical membrane-spanning segments follow: residues 7–27 (LAIGIGGFIGAILRAYTAGLV), 37–57 (FGTLSVNLIGSLLLGMFIGAI), 73–93 (TGMMGAFTTFSTFAVESFFLF), and 96–116 (ALYIQALSYILLNVIGCIILA). Positions 77 and 80 each coordinate Na(+).

Belongs to the fluoride channel Fluc/FEX (TC 1.A.43) family.

The protein resides in the cell inner membrane. The enzyme catalyses fluoride(in) = fluoride(out). Its activity is regulated as follows. Na(+) is not transported, but it plays an essential structural role and its presence is essential for fluoride channel function. In terms of biological role, fluoride-specific ion channel. Important for reducing fluoride concentration in the cell, thus reducing its toxicity. The polypeptide is Fluoride-specific ion channel FluC (Nautilia profundicola (strain ATCC BAA-1463 / DSM 18972 / AmH)).